A 638-amino-acid polypeptide reads, in one-letter code: 1-deoxy-D-xylulose-5-phosphate synthase (638 aa).

Thiamine diphosphate-binding positions include histidine 72 and 113-115; that span reads GHA. Aspartate 144 contributes to the Mg(2+) binding site. Thiamine diphosphate contacts are provided by residues 145–146, asparagine 174, tyrosine 289, and glutamate 372; that span reads GA. Asparagine 174 lines the Mg(2+) pocket.

This sequence belongs to the transketolase family. DXPS subfamily. Homodimer. Requires Mg(2+) as cofactor. It depends on thiamine diphosphate as a cofactor.

The enzyme catalyses D-glyceraldehyde 3-phosphate + pyruvate + H(+) = 1-deoxy-D-xylulose 5-phosphate + CO2. The protein operates within metabolic intermediate biosynthesis; 1-deoxy-D-xylulose 5-phosphate biosynthesis; 1-deoxy-D-xylulose 5-phosphate from D-glyceraldehyde 3-phosphate and pyruvate: step 1/1. In terms of biological role, catalyzes the acyloin condensation reaction between C atoms 2 and 3 of pyruvate and glyceraldehyde 3-phosphate to yield 1-deoxy-D-xylulose-5-phosphate (DXP). In Gloeobacter violaceus (strain ATCC 29082 / PCC 7421), this protein is 1-deoxy-D-xylulose-5-phosphate synthase.